A 551-amino-acid polypeptide reads, in one-letter code: MNLWQQNYDPAGNIWLSSLIASLPILFFFFALIKLKLKGYVAASWTVVIALAVALLFYKMPVDHALASVVYGFFYGLWPIAWIIIAAVFVYKISVKTGQFDIIRSSILSITPDQRLQMLIVGFCFGAFLEGAAGFGAPVAITAALLVGLGFNPLYAAGLCLIVNTAPVAFGAMGIPILVAGQVTGLDSFEIGQMVGRQLPFLTIIVLFWIMAIMDGWRGVKETWPAVMVAGGSFAIAQYLSSNFIGPELPDIISSLVSLVCLTLFLKRWQPVRIFRFGDMGASQVDQTLARTRYTTGQIVRAWSPFLFLTATVTLWSVPPFKALFAPGGALYDWVINVPVPYLDKLVARMPPVVHEATAYAAVYKFDWFSATGTAILFAALLSIVWLKMKPSAAIQTFGSTLKELALPIYSIGMVLAFAFISNYSGLSSTLALALAHTGSAFTFFSPFLGWLGVFLTGSDTSSNALFASLQATAAQQIGVSDVLMVAANTTGGVTGKMISPQSIAIACAAVGLVGKESDLFRFTVKHSLIFTCMVGVITTLQAYVLTWMIP.

12 helical membrane passes run 13–33, 37–57, 69–89, 131–151, 159–179, 194–214, 244–264, 306–326, 366–386, 405–425, 438–458, and 530–550; these read NIWL…FALI, LKGY…ALLF, VVYG…AAVF, GAAG…GLGF, LCLI…PILV, MVGR…MAIM, FIGP…CLTL, FLFL…ALFA, FDWF…SIVW, LALP…SNYS, TGSA…FLTG, and IFTC…TWMI.

Belongs to the lactate permease family.

The protein resides in the cell inner membrane. The enzyme catalyses (S)-lactate(in) + H(+)(in) = (S)-lactate(out) + H(+)(out). The catalysed reaction is (R)-lactate(in) + H(+)(in) = (R)-lactate(out) + H(+)(out). It catalyses the reaction glycolate(in) + H(+)(in) = glycolate(out) + H(+)(out). Its function is as follows. Uptake of L-lactate across the membrane. Can also transport D-lactate and glycolate. Seems to be driven by a proton motive force. This is L-lactate permease (lldP) from Salmonella typhimurium (strain LT2 / SGSC1412 / ATCC 700720).